The following is a 156-amino-acid chain: ATP synthase subunit b (156 aa).

Residues 4–26 form a helical membrane-spanning segment; the sequence is GATFWGPMISFALFVWFTMKFVW.

This sequence belongs to the ATPase B chain family. As to quaternary structure, F-type ATPases have 2 components, F(1) - the catalytic core - and F(0) - the membrane proton channel. F(1) has five subunits: alpha(3), beta(3), gamma(1), delta(1), epsilon(1). F(0) has three main subunits: a(1), b(2) and c(10-14). The alpha and beta chains form an alternating ring which encloses part of the gamma chain. F(1) is attached to F(0) by a central stalk formed by the gamma and epsilon chains, while a peripheral stalk is formed by the delta and b chains.

The protein resides in the cell inner membrane. F(1)F(0) ATP synthase produces ATP from ADP in the presence of a proton or sodium gradient. F-type ATPases consist of two structural domains, F(1) containing the extramembraneous catalytic core and F(0) containing the membrane proton channel, linked together by a central stalk and a peripheral stalk. During catalysis, ATP synthesis in the catalytic domain of F(1) is coupled via a rotary mechanism of the central stalk subunits to proton translocation. Its function is as follows. Component of the F(0) channel, it forms part of the peripheral stalk, linking F(1) to F(0). This is ATP synthase subunit b from Halorhodospira halophila (strain DSM 244 / SL1) (Ectothiorhodospira halophila (strain DSM 244 / SL1)).